The sequence spans 549 residues: 4-hydroxybutyrate--CoA ligase 2 (549 aa).

Residues 195-203 (TSGTTGLPK), 336-341 (ETYGPH), D425, and R440 each bind ATP. Residues 448 to 450 (GGE), K506, and 514 to 516 (CPK) each bind CoA. K530 is a binding site for ATP.

This sequence belongs to the ATP-dependent AMP-binding enzyme family. Mg(2+) is required as a cofactor. Mn(2+) serves as cofactor.

The catalysed reaction is 4-hydroxybutanoate + ATP + CoA = 4-hydroxybutanoyl-CoA + AMP + diphosphate. It carries out the reaction acetate + ATP + CoA = acetyl-CoA + AMP + diphosphate. It catalyses the reaction propanoate + ATP + CoA = propanoyl-CoA + AMP + diphosphate. The enzyme catalyses a medium-chain fatty acid + ATP + CoA = a medium-chain fatty acyl-CoA + AMP + diphosphate. Catalyzes the ligation of coenzyme A (CoA) to 4-hydroxybutyrate (4HB). It can also use butyrate, valerate, propionate, acetate and 3-hydroxybutyrate (3HB) as substrates. The sequence is that of 4-hydroxybutyrate--CoA ligase 2 from Metallosphaera sedula (strain ATCC 51363 / DSM 5348 / JCM 9185 / NBRC 15509 / TH2).